Consider the following 153-residue polypeptide: MNEKPVLGIQDIQNLLPHRYPFLLVDKILSYDLNTRSVVAQKNVTINEPFFAGHFPGAPIMPGVLILEALAQAAGVLLGIILENDRDKKIALFLGIQKAKFRQPVKPGDVLTLKAEFSLISAKGGKAFAQAFVGSQVVAEGELSFVLVKKESI.

H54 is an active-site residue.

Belongs to the thioester dehydratase family. FabZ subfamily.

Its subcellular location is the cytoplasm. The catalysed reaction is a (3R)-hydroxyacyl-[ACP] = a (2E)-enoyl-[ACP] + H2O. Involved in unsaturated fatty acids biosynthesis. Catalyzes the dehydration of short chain beta-hydroxyacyl-ACPs and long chain saturated and unsaturated beta-hydroxyacyl-ACPs. This is 3-hydroxyacyl-[acyl-carrier-protein] dehydratase FabZ from Chlamydia trachomatis serovar L2 (strain ATCC VR-902B / DSM 19102 / 434/Bu).